The chain runs to 219 residues: Ribosomal RNA small subunit methyltransferase I (219 aa).

Belongs to the methyltransferase superfamily. RsmI family.

The protein resides in the cytoplasm. It carries out the reaction cytidine(1402) in 16S rRNA + S-adenosyl-L-methionine = 2'-O-methylcytidine(1402) in 16S rRNA + S-adenosyl-L-homocysteine + H(+). Its function is as follows. Catalyzes the 2'-O-methylation of the ribose of cytidine 1402 (C1402) in 16S rRNA. The protein is Ribosomal RNA small subunit methyltransferase I of Coprothermobacter proteolyticus (strain ATCC 35245 / DSM 5265 / OCM 4 / BT).